The primary structure comprises 930 residues: Wings apart-like protein 1 (930 aa).

The segment at 540-566 (FSPTSMSGSQSSVSGNEPTTSKTRVGS) is disordered. Residues 541-553 (SPTSMSGSQSSVS) show a composition bias toward low complexity. The segment covering 554 to 566 (GNEPTTSKTRVGS) has biased composition (polar residues). The WAPL domain maps to 854-909 (KEAEKMIVEAYSALLLAFLSTESRSIRNSIKDYLPKRNLAILVPVLERFVAFHMTL).

Belongs to the WAPL family. In terms of assembly, interacts with the cohesin complex throughout the cell cycle. In terms of tissue distribution, expressed in roots, leaves, buds and siliques.

Its subcellular location is the nucleus. The protein resides in the chromosome. Functionally, regulator of sister chromatid cohesion in meiosis which negatively regulates cohesin association with chromatin, acting as an antagonist of CTF7. Cohesion ensures that chromosome partitioning is accurate in both meiotic and mitotic cells and plays an important role in DNA repair. Essential for the prophase removal of cohesin during meiosis thus determining the timely release of meiotic cohesion. Important for proper spindle attachment and assembly during meiosis. Helps to prevent abnormal centromere association during prophase I in meiocytes. Required for early embryonic patterning. Also involved in chromosome segregation during mitosis. This chain is Wings apart-like protein 1, found in Arabidopsis thaliana (Mouse-ear cress).